We begin with the raw amino-acid sequence, 433 residues long: Steroid hormone receptor ERR2 (433 aa).

Residues 1–38 form a disordered region; it reads MSSEDRHLGSSCGSFIKTEPSSPSSGIDALSHHSPSGS. The segment at 93-211 is interaction with NANOG; the sequence is YMLNAIPKRL…SPPAKKPLTK (119 aa). A DNA-binding region (nuclear receptor) is located at residues 100–186; that stretch reads KRLCLVCGDI…RVRGGRQKYK (87 aa). 2 consecutive NR C4-type zinc fingers follow at residues 103 to 123 and 139 to 163; these read CLVC…CEAC and CPAT…FMKC. The tract at residues 203 to 433 is essential for ESRRB transcriptional activity and interaction with NCOA3; the sequence is PPAKKPLTKI…LFLEMLEAKV (231 aa). Positions 208–432 constitute an NR LBD domain; it reads PLTKIVSNLL…KLFLEMLEAK (225 aa).

The protein belongs to the nuclear hormone receptor family. NR3 subfamily. As to quaternary structure, binds DNA as a monomer. Interacts with NR0B1; represses ESRRB activity at the GATA6 promoter. Interacts with NANOG; reciprocally modulates their transcriptional activities and activates POU5F1 expression. Interacts with NCOA3; mediates the interaction between ESRRB and RNA polymerase II complexes and allows NCOA3 corecruitment to ESRRB, KLF4, NANOG, and SOX2 enhancer regions to trigger ESRRB-dependent gene activation involved in self-renewal and pluripotency. Interacts with KDM1A; co-occupes the core set of ESRRB targets including ELF5 and EOMES. Interacts with the multiprotein complex Integrator, at least composed of INTS1, INTS2, INTS3, INTS4, INTS5, INTS6, INTS7, INTS8, INTS9/RC74, INTS10, INTS11/CPSF3L and INTS12; ESRRB is probably not a core component of the integrator complex and associates to integrator via its interaction with INTS1 and INTS9; attracts the transcriptional machinery. Interacts with JARID2. Interacts with POU5F1; recruits ESRRB near the POU5F1-SOX2 element in the NANOG proximal promoter leading to activation of NANOG expression; the interaction is DNA independent. In terms of processing, acetylated by PCAF/KAT2 (in vitro). Highly expressed in undifferentiated ESCs. Expressed in immature horizontal cells and in rod photoreceptors at intermediate and late stages of differentiation. Expressed in endolymph-producing epithelial cells.

It localises to the nucleus. Its subcellular location is the cytoplasm. The protein localises to the chromosome. Its function is as follows. Transcription factor that binds a canonical ESRRB recognition (ERRE) sequence 5'TCAAGGTCA-3' localized on promoter and enhancer of targets genes regulating their expression or their transcriptional activity. Plays a role, in a LIF-independent manner, in maintainance of self-renewal and pluripotency of embryonic and trophoblast stem cells through different signaling pathways including FGF signaling pathway and Wnt signaling pathways. Involved in morula development (2-16 cells embryos) by acting as a regulator at the 8-cell stage. Upon FGF signaling pathway activation, interacts with KDM1A by directly binding to enhancer site of ELF5 and EOMES and activating their transcription leading to self-renewal of trophoblast stem cells. Also regulates expression of multiple rod-specific genes and is required for survival of this cell type. Plays a role as transcription factor activator of GATA6, NR0B1, POU5F1 and PERM1. Plays a role as transcription factor repressor of NFE2L2 transcriptional activity and ESR1 transcriptional activity. During mitosis remains bound to a subset of interphase target genes, including pluripotency regulators, through the canonical ESRRB recognition (ERRE) sequence, leading to their transcriptional activation in early G1 phase. Can coassemble on structured DNA elements with other transcription factors like SOX2, POU5F1, KDM1A and NCOA3 to trigger ESRRB-dependent gene activation. This mechanism, in the case of SOX2 corecruitment prevents the embryonic stem cells (ESCs) to epiblast stem cells (EpiSC) transition through positive regulation of NR0B1 that inhibits the EpiSC transcriptional program. Also plays a role inner ear development by controlling expression of ion channels and transporters and in early placentation. In Mus musculus (Mouse), this protein is Steroid hormone receptor ERR2.